The primary structure comprises 56 residues: MAKKNKNVLVRLVSTAGTGVFWVKKRNPRTQTEKLSFRKYDKVVRKHVLFKEEKIK.

It belongs to the bacterial ribosomal protein bL33 family.

The sequence is that of Large ribosomal subunit protein bL33 (rpmG) from Rickettsia prowazekii (strain Madrid E).